The sequence spans 367 residues: Glutamate 5-kinase (367 aa).

Lys10 is an ATP binding site. Positions 50, 137, and 149 each coordinate substrate. ATP is bound by residues 169-170 (TD) and 211-217 (TGGMATK). The PUA domain maps to 275 to 353 (AGELVVDDGA…QQIGEILGYE (79 aa)).

The protein belongs to the glutamate 5-kinase family.

The protein localises to the cytoplasm. It carries out the reaction L-glutamate + ATP = L-glutamyl 5-phosphate + ADP. The protein operates within amino-acid biosynthesis; L-proline biosynthesis; L-glutamate 5-semialdehyde from L-glutamate: step 1/2. In terms of biological role, catalyzes the transfer of a phosphate group to glutamate to form L-glutamate 5-phosphate. The protein is Glutamate 5-kinase of Erwinia tasmaniensis (strain DSM 17950 / CFBP 7177 / CIP 109463 / NCPPB 4357 / Et1/99).